Reading from the N-terminus, the 324-residue chain is Glutathione synthetase (324 aa).

Residues 125–312 (EKLFTTTHFP…ISTIILDNLE (188 aa)) enclose the ATP-grasp domain. 152–209 (FIKTYKDIIIKPLHGMAGLSIFRIKEHDPNTSVIIETMTKYETIPCISQNYITDIQKG) contributes to the ATP binding site. Positions 283 and 285 each coordinate Mg(2+).

Belongs to the prokaryotic GSH synthase family. Requires Mg(2+) as cofactor. It depends on Mn(2+) as a cofactor.

The catalysed reaction is gamma-L-glutamyl-L-cysteine + glycine + ATP = glutathione + ADP + phosphate + H(+). The protein operates within sulfur metabolism; glutathione biosynthesis; glutathione from L-cysteine and L-glutamate: step 2/2. The chain is Glutathione synthetase from Buchnera aphidicola subsp. Baizongia pistaciae (strain Bp).